Reading from the N-terminus, the 424-residue chain is Sulfatase ppz1 (424 aa).

The Ca(2+) site is built by D13, D203, and N204.

It belongs to the sulfatase family. Ca(2+) is required as a cofactor.

Sulfatase; part of the gene cluster that mediates the biosynthesis of pyrrolopyrazines, secondary metabolites showing insecticidal activity. The role of ppz1 within the pathway has still to be determined. The single multifunctional NRPS ppzA is sufficient to produce peramine via condensation of 1-pyrroline-5-carboxylate and arginine, N-methylation of the alpha-amino group of arginine and reduction of the thioester and the cyclization to form an iminium ion resulting in release from the peptide synthetase. Deprotonation of this intermediate and oxidation of the pyrroline ring would give rise to peramine. In Epichloe species that produce only peramine, the peramine synthetase gene is not localized in a gene cluster, in contrast to Metarhizium species that contain additional pyrrolopyrazine biosynthesis genes. The 2-oxoglutarate-Fe(II) type oxidoreductase ppzC hydroxylates peramine to yield the newly identified compound 8-hydroxyperamine whereas ppzD converts L-proline into trans-4-hydroxy-L-proline, a precursor of peramine biosynthesis. This is Sulfatase ppz1 from Metarhizium majus (strain ARSEF 297).